The following is a 417-amino-acid chain: Tyrosine--tRNA ligase (417 aa).

Tyrosine 34 contributes to the L-tyrosine binding site. Positions 39–48 (PSGDSLHIGH) match the 'HIGH' region motif. Residues tyrosine 165 and glutamine 169 each coordinate L-tyrosine. Positions 227–231 (KFGKT) match the 'KMSKS' region motif. Lysine 230 provides a ligand contact to ATP. An S4 RNA-binding domain is found at 349 to 415 (ANIVDWLVDT…GKKNYTLAKV (67 aa)).

It belongs to the class-I aminoacyl-tRNA synthetase family. TyrS type 1 subfamily. As to quaternary structure, homodimer.

The protein localises to the cytoplasm. The catalysed reaction is tRNA(Tyr) + L-tyrosine + ATP = L-tyrosyl-tRNA(Tyr) + AMP + diphosphate + H(+). Its function is as follows. Catalyzes the attachment of tyrosine to tRNA(Tyr) in a two-step reaction: tyrosine is first activated by ATP to form Tyr-AMP and then transferred to the acceptor end of tRNA(Tyr). This is Tyrosine--tRNA ligase from Limosilactobacillus fermentum (strain NBRC 3956 / LMG 18251) (Lactobacillus fermentum).